The following is a 137-amino-acid chain: Putative pre-16S rRNA nuclease (137 aa).

This sequence belongs to the YqgF nuclease family.

Its subcellular location is the cytoplasm. Could be a nuclease involved in processing of the 5'-end of pre-16S rRNA. The sequence is that of Putative pre-16S rRNA nuclease from Bacillus cereus (strain 03BB102).